A 140-amino-acid chain; its full sequence is Probable prefoldin subunit 6 (140 aa).

Belongs to the prefoldin subunit beta family. Heterohexamer of two PFD-alpha type and four PFD-beta type subunits.

Binds specifically to cytosolic chaperonin (c-CPN) and transfers target proteins to it. Binds to nascent polypeptide chain and promotes folding in an environment in which there are many competing pathways for nonnative proteins. This Dictyostelium discoideum (Social amoeba) protein is Probable prefoldin subunit 6 (pfdn6).